The chain runs to 652 residues: DNA ligase (652 aa).

NAD(+) is bound by residues 29–33, 78–79, and Glu-107; these read DAEYD and SL. The N6-AMP-lysine intermediate role is filled by Lys-109. Arg-130, Glu-164, Lys-278, and Lys-302 together coordinate NAD(+). Residues Cys-395, Cys-398, Cys-413, and Cys-418 each coordinate Zn(2+). In terms of domain architecture, BRCT spans 577 to 652; it reads TDDAILSGKT…VKDEAWLLDL (76 aa).

It belongs to the NAD-dependent DNA ligase family. LigA subfamily. The cofactor is Mg(2+). Requires Mn(2+) as cofactor.

It catalyses the reaction NAD(+) + (deoxyribonucleotide)n-3'-hydroxyl + 5'-phospho-(deoxyribonucleotide)m = (deoxyribonucleotide)n+m + AMP + beta-nicotinamide D-nucleotide.. Its function is as follows. DNA ligase that catalyzes the formation of phosphodiester linkages between 5'-phosphoryl and 3'-hydroxyl groups in double-stranded DNA using NAD as a coenzyme and as the energy source for the reaction. It is essential for DNA replication and repair of damaged DNA. This Streptococcus thermophilus (strain ATCC BAA-491 / LMD-9) protein is DNA ligase.